Here is a 95-residue protein sequence, read N- to C-terminus: Small ribosomal subunit protein uS19 (95 aa).

This sequence belongs to the universal ribosomal protein uS19 family.

Functionally, protein S19 forms a complex with S13 that binds strongly to the 16S ribosomal RNA. The protein is Small ribosomal subunit protein uS19 of Chloroflexus aggregans (strain MD-66 / DSM 9485).